We begin with the raw amino-acid sequence, 657 residues long: MRGCLQSVKWLTSALRPSQSLASSTRYPRRLLSTSAPRNAQVRKPASEVEQRIAAIPIERFRNFCIVAHVDHGKSTLSDRLLELTGTIEAGANKQVLDKLDVERERGITVKAQTCSMLYNHQGEDYLLHLVDTPGHVDFRAEVSRSYASCGGALLLVDASQGIQAQTVANFYLAFAEGLKLVPVINKVDLPSADPQRALDQMKNTFELDPESAVLVSAKTGLNVSQLLPTVIEQIPAPVGDRTKPLRMLLVDSWYSTYKGVILLVRLFDGEIRAGDQVVSFATGLKYTVGEVGIMYPGQTAQSVLRAGQVGYIYFNPAMKRSQEAKVGDTYTKVGSERLVQPLPGFEEPKAMVFVAAYPVDASDFPHLEDSINQLILNDRSVTLQKESSEALGAGFRLGFLGTLHCSVFEDRLRQEHGASIIITPPTVPFKVIWKDGKEEIITNPALFPEEDTLRAKVTELQEPFVLATLTFPEEYLGRVIELCESNRGEQKSLEFFTSTQVILKYELPLAQLVDDFFGKLKGSTKGYASLDYEESGWRRSNISKLQLLVNKVPVDAVSRVVHSSQVQRLGRLWVSKFKEHVDRQMFEVVIQAAAGRNVVARESIKPFRKDVLQKLHAADVTRRKKLLEKQKEGRKKLKAVGNVVIEHKAFQAFLAK.

A mitochondrion-targeting transit peptide spans 1–39 (MRGCLQSVKWLTSALRPSQSLASSTRYPRRLLSTSAPRN). The region spanning 59–239 (ERFRNFCIVA…TVIEQIPAPV (181 aa)) is the tr-type G domain. Residues 68–75 (AHVDHGKS), 132–136 (DTPGH), and 186–189 (NKVD) contribute to the GTP site.

This sequence belongs to the TRAFAC class translation factor GTPase superfamily. Classic translation factor GTPase family. LepA subfamily.

It localises to the mitochondrion inner membrane. The enzyme catalyses GTP + H2O = GDP + phosphate + H(+). Functionally, promotes mitochondrial protein synthesis. May act as a fidelity factor of the translation reaction, by catalyzing a one-codon backward translocation of tRNAs on improperly translocated ribosomes. Binds to mitochondrial ribosomes in a GTP-dependent manner. In Ajellomyces capsulatus (strain G186AR / H82 / ATCC MYA-2454 / RMSCC 2432) (Darling's disease fungus), this protein is Translation factor GUF1, mitochondrial.